Reading from the N-terminus, the 478-residue chain is tRNA(Ile)-lysidine synthase (478 aa).

27-32 (SGGSDS) contributes to the ATP binding site.

This sequence belongs to the tRNA(Ile)-lysidine synthase family.

It is found in the cytoplasm. The enzyme catalyses cytidine(34) in tRNA(Ile2) + L-lysine + ATP = lysidine(34) in tRNA(Ile2) + AMP + diphosphate + H(+). Functionally, ligates lysine onto the cytidine present at position 34 of the AUA codon-specific tRNA(Ile) that contains the anticodon CAU, in an ATP-dependent manner. Cytidine is converted to lysidine, thus changing the amino acid specificity of the tRNA from methionine to isoleucine. In Rickettsia rickettsii (strain Iowa), this protein is tRNA(Ile)-lysidine synthase.